A 157-amino-acid polypeptide reads, in one-letter code: 2-C-methyl-D-erythritol 2,4-cyclodiphosphate synthase (157 aa).

Residues Asp-8 and His-10 each coordinate a divalent metal cation. Residues 8–10 (DIH) and 34–35 (HS) contribute to the 4-CDP-2-C-methyl-D-erythritol 2-phosphate site. Position 42 (His-42) interacts with a divalent metal cation. Residues 56 to 58 (DIG), 61 to 65 (FPDTD), 132 to 135 (TTNE), and Arg-142 contribute to the 4-CDP-2-C-methyl-D-erythritol 2-phosphate site.

It belongs to the IspF family. In terms of assembly, homotrimer. Requires a divalent metal cation as cofactor.

The enzyme catalyses 4-CDP-2-C-methyl-D-erythritol 2-phosphate = 2-C-methyl-D-erythritol 2,4-cyclic diphosphate + CMP. Its pathway is isoprenoid biosynthesis; isopentenyl diphosphate biosynthesis via DXP pathway; isopentenyl diphosphate from 1-deoxy-D-xylulose 5-phosphate: step 4/6. In terms of biological role, involved in the biosynthesis of isopentenyl diphosphate (IPP) and dimethylallyl diphosphate (DMAPP), two major building blocks of isoprenoid compounds. Catalyzes the conversion of 4-diphosphocytidyl-2-C-methyl-D-erythritol 2-phosphate (CDP-ME2P) to 2-C-methyl-D-erythritol 2,4-cyclodiphosphate (ME-CPP) with a corresponding release of cytidine 5-monophosphate (CMP). This Chloroherpeton thalassium (strain ATCC 35110 / GB-78) protein is 2-C-methyl-D-erythritol 2,4-cyclodiphosphate synthase.